A 153-amino-acid chain; its full sequence is Interleukin-4 (153 aa).

The signal sequence occupies residues 1-24 (MGLTSQLLPPLFFLLACAGNFVHG). Cystine bridges form between Cys27–Cys151, Cys48–Cys89, and Cys70–Cys123. The N-linked (GlcNAc...) asparagine glycan is linked to Asn62.

This sequence belongs to the IL-4/IL-13 family. In terms of assembly, interacts with IL4R. Interacts with IL13RA1.

It localises to the secreted. Its function is as follows. Cytokine secreted primarily by mast cells, T-cells, eosinophils, and basophils that plays a role in regulating antibody production, hematopoiesis and inflammation, and the development of effector T-cell responses. Induces the expression of class II MHC molecules on resting B-cells. Enhances both secretion and cell surface expression of IgE and IgG1. Also regulates the expression of the low affinity Fc receptor for IgE (CD23) on both lymphocytes and monocytes. Positively regulates IL31RA expression in macrophages. Stimulates autophagy in dendritic cells by interfering with mTORC1 signaling and through the induction of RUFY4. In addition, plays a critical role in higher functions of the normal brain, such as memory and learning. Upon binding to IL4, IL4R receptor dimerizes either with the common IL2R gamma chain/IL2RG to produce the type 1 signaling complex, located mainly on hematopoietic cells, or with the IL13RA1 to produce the type 2 complex, which is also expressed on nonhematopoietic cells. Engagement of both types of receptors initiates JAK3 and to a lower extend JAK1 phosphorylation leading to activation of the signal transducer and activator of transcription 6/STAT6. This is Interleukin-4 (IL4) from Homo sapiens (Human).